The chain runs to 266 residues: Norfluorocurarine synthase 2 (266 aa).

An AB hydrolase-1 domain is found at 11–121 (HFVLVHGAGH…VMPDSTHPPN (111 aa)). Catalysis depends on residues Ser86, Asp216, and His244.

It belongs to the AB hydrolase superfamily. As to quaternary structure, homodimer.

It carries out the reaction 17-dehydropreakuammicine + H2O = norfluorocurarine + methanol + CO2. It functions in the pathway alkaloid biosynthesis. Hydrolase involved in the biosynthesis of curare monoterpene indole alkaloids (MIAs), natural products such as diaboline, a pharmacologically active compound used to regulate blood pressure. Curare alkaloids act as animal glycine receptor antagonists. Catalyzes the conversion of dehydropreakuammicine to norfluorocurarine. This Strychnos sp protein is Norfluorocurarine synthase 2.